An 878-amino-acid polypeptide reads, in one-letter code: Pyruvate dehydrogenase phosphatase regulatory subunit, mitochondrial (878 aa).

The transit peptide at 1–93 (MLYRLLSIVQ…CAGILSTARH (93 aa)) directs the protein to the mitochondrion.

Belongs to the GcvT family. Heterodimer of a catalytic (PDP1) and a regulatory (PDPR) subunit.

It localises to the mitochondrion matrix. Its function is as follows. Decreases the sensitivity of PDP1 to magnesium ions, and this inhibition is reversed by the polyamine spermine. The sequence is that of Pyruvate dehydrogenase phosphatase regulatory subunit, mitochondrial (Pdpr) from Mus musculus (Mouse).